The following is a 396-amino-acid chain: Ribosomal RNA large subunit methyltransferase I (396 aa).

Residues 2–79 (SIRIKLKPGR…KEEAIDRDFF (78 aa)) enclose the PUA domain.

It belongs to the methyltransferase superfamily. RlmI family.

The protein resides in the cytoplasm. The catalysed reaction is cytidine(1962) in 23S rRNA + S-adenosyl-L-methionine = 5-methylcytidine(1962) in 23S rRNA + S-adenosyl-L-homocysteine + H(+). In terms of biological role, specifically methylates the cytosine at position 1962 (m5C1962) of 23S rRNA. This chain is Ribosomal RNA large subunit methyltransferase I, found in Shewanella amazonensis (strain ATCC BAA-1098 / SB2B).